We begin with the raw amino-acid sequence, 220 residues long: Protein GrpE (220 aa).

Composition is skewed to polar residues over residues 1–12 (MEQGDKQATYNE) and 50–63 (AAST…QTSV). Positions 1 to 67 (MEQGDKQATY…AEQTSVEAEE (67 aa)) are disordered.

It belongs to the GrpE family. Homodimer.

It is found in the cytoplasm. Its function is as follows. Participates actively in the response to hyperosmotic and heat shock by preventing the aggregation of stress-denatured proteins, in association with DnaK and GrpE. It is the nucleotide exchange factor for DnaK and may function as a thermosensor. Unfolded proteins bind initially to DnaJ; upon interaction with the DnaJ-bound protein, DnaK hydrolyzes its bound ATP, resulting in the formation of a stable complex. GrpE releases ADP from DnaK; ATP binding to DnaK triggers the release of the substrate protein, thus completing the reaction cycle. Several rounds of ATP-dependent interactions between DnaJ, DnaK and GrpE are required for fully efficient folding. This chain is Protein GrpE, found in Geobacillus thermodenitrificans (strain NG80-2).